Reading from the N-terminus, the 49-residue chain is uncharacterized protein (49 aa).

Residues 6–28 traverse the membrane as a helical segment; the sequence is IYPLTVFYFFAIEMSVFCYYNWF.

The protein resides in the membrane. This is an uncharacterized protein from Saccharomyces cerevisiae (strain ATCC 204508 / S288c) (Baker's yeast).